Here is a 218-residue protein sequence, read N- to C-terminus: Thiopurine S-methyltransferase (218 aa).

Residues W10, L45, E66, and R123 each coordinate S-adenosyl-L-methionine.

This sequence belongs to the class I-like SAM-binding methyltransferase superfamily. TPMT family.

It is found in the cytoplasm. The enzyme catalyses S-adenosyl-L-methionine + a thiopurine = S-adenosyl-L-homocysteine + a thiopurine S-methylether.. This is Thiopurine S-methyltransferase from Shewanella oneidensis (strain ATCC 700550 / JCM 31522 / CIP 106686 / LMG 19005 / NCIMB 14063 / MR-1).